The primary structure comprises 224 residues: Ribonuclease HII (224 aa).

Residues 7 to 217 form the RNase H type-2 domain; it reads STIMGIDEAG…SNAVIADCLQ (211 aa). Asp13, Glu14, and Asp111 together coordinate a divalent metal cation.

Belongs to the RNase HII family. The cofactor is Mn(2+). Mg(2+) is required as a cofactor.

It localises to the cytoplasm. It carries out the reaction Endonucleolytic cleavage to 5'-phosphomonoester.. Functionally, endonuclease that specifically degrades the RNA of RNA-DNA hybrids. The chain is Ribonuclease HII from Methanocella arvoryzae (strain DSM 22066 / NBRC 105507 / MRE50).